The primary structure comprises 273 residues: Large ribosomal subunit protein uL2 (273 aa).

Disordered regions lie at residues 35–54 (DSKS…TRHI) and 222–273 (GMAM…RRNK). Residues 39–49 (KSGGRNNNGRI) are compositionally biased toward polar residues. Residues 229–239 (DHPHGGGEGRN) show a composition bias toward basic and acidic residues. Basic residues predominate over residues 253 to 273 (KGFKTRKNKRTDKYIVRRRNK).

This sequence belongs to the universal ribosomal protein uL2 family. As to quaternary structure, part of the 50S ribosomal subunit. Forms a bridge to the 30S subunit in the 70S ribosome.

Functionally, one of the primary rRNA binding proteins. Required for association of the 30S and 50S subunits to form the 70S ribosome, for tRNA binding and peptide bond formation. It has been suggested to have peptidyltransferase activity; this is somewhat controversial. Makes several contacts with the 16S rRNA in the 70S ribosome. This is Large ribosomal subunit protein uL2 from Aeromonas salmonicida (strain A449).